The following is a 557-amino-acid chain: Dihydroxy-acid dehydratase (557 aa).

Mg(2+) is bound at residue Asp78. Cys119 is a [2Fe-2S] cluster binding site. Positions 120 and 121 each coordinate Mg(2+). Lys121 is modified (N6-carboxylysine). Cys192 is a binding site for [2Fe-2S] cluster. Glu442 is a Mg(2+) binding site. Ser468 acts as the Proton acceptor in catalysis.

It belongs to the IlvD/Edd family. In terms of assembly, homodimer. The cofactor is [2Fe-2S] cluster. Mg(2+) is required as a cofactor.

It carries out the reaction (2R)-2,3-dihydroxy-3-methylbutanoate = 3-methyl-2-oxobutanoate + H2O. It catalyses the reaction (2R,3R)-2,3-dihydroxy-3-methylpentanoate = (S)-3-methyl-2-oxopentanoate + H2O. It participates in amino-acid biosynthesis; L-isoleucine biosynthesis; L-isoleucine from 2-oxobutanoate: step 3/4. Its pathway is amino-acid biosynthesis; L-valine biosynthesis; L-valine from pyruvate: step 3/4. In terms of biological role, functions in the biosynthesis of branched-chain amino acids. Catalyzes the dehydration of (2R,3R)-2,3-dihydroxy-3-methylpentanoate (2,3-dihydroxy-3-methylvalerate) into 2-oxo-3-methylpentanoate (2-oxo-3-methylvalerate) and of (2R)-2,3-dihydroxy-3-methylbutanoate (2,3-dihydroxyisovalerate) into 2-oxo-3-methylbutanoate (2-oxoisovalerate), the penultimate precursor to L-isoleucine and L-valine, respectively. This is Dihydroxy-acid dehydratase from Bacillus cereus (strain AH820).